Consider the following 1280-residue polypeptide: Papilin (1280 aa).

The N-terminal stretch at 1-20 (MQLFPLLFSLLLTSTPGSWA) is a signal peptide. TSP type-1 domains follow at residues 27 to 81 (SDTW…ESCP), 305 to 362 (RGFS…QPCP), 363 to 422 (KTKR…ACNL), 424 to 482 (HCAV…EACP), and 485 to 540 (RGQA…QPCH). Cystine bridges form between Cys-39–Cys-75, Cys-43–Cys-80, and Cys-54–Cys-65. Disulfide bonds link Cys-425/Cys-464, Cys-436/Cys-476, and Cys-440/Cys-481. Disordered stretches follow at residues 541–626 (LPQE…DCRH) and 672–715 (PQQA…PSEC). A compositionally biased stretch (polar residues) spans 585–599 (AQSNPREGQDPNLSS). Basic and acidic residues predominate over residues 706–715 (QAHEGEPSEC). 3 disulfides stabilise this stretch: Cys-750–Cys-800, Cys-759–Cys-783, and Cys-775–Cys-796. One can recognise a BPTI/Kunitz inhibitor domain in the interval 750-800 (CLLPSAQGSCGDWAARWYFVASVGRCNRFWYGGCHGNANNFASEQECMNTC). Residues 800 to 902 (CRGQHGPRRP…AVPPTHSPSY (103 aa)) are disordered. The segment covering 879–891 (IRPRVPGLDREAR) has biased composition (basic and acidic residues). Residues 900 to 990 (PSYRIRLAGS…EPQEIQLRVT (91 aa)) enclose the Ig-like C2-type 1 domain. Cys-926 and Cys-973 form a disulfide bridge. The segment covering 1002–1012 (PRHFPEPRNPD) has biased composition (basic and acidic residues). Residues 1002-1042 (PRHFPEPRNPDLGHGPPHRGTGAEAGGHRVLSPSHPRPATR) are disordered. Ig-like C2-type domains follow at residues 1039–1128 (PATR…VQLR) and 1133–1218 (LTIT…TEVK). 2 disulfides stabilise this stretch: Cys-1065-Cys-1112 and Cys-1154-Cys-1202. A PLAC domain is found at 1231-1270 (LGKDCIDQPELANCALILQAQLCGNEYYSSFCCASCSRFQ).

The protein belongs to the papilin family.

It localises to the secreted. This is Papilin (Papln) from Mus musculus (Mouse).